Here is a 545-residue protein sequence, read N- to C-terminus: Betaine receptor acr-23 (545 aa).

The signal sequence occupies residues 1 to 19; it reads MHRIYTFLIFISQLALGLS. Over 20-244 the chain is Extracellular; the sequence is NNPDIPIQYE…DVVIQRKPLY (225 aa). N53 and N97 each carry an N-linked (GlcNAc...) asparagine glycan. 2 disulfide bridges follow: C157-C171 and C224-C225. N228 carries an N-linked (GlcNAc...) asparagine glycan. The chain crosses the membrane as a helical span at residues 245 to 265; the sequence is YVLNLIAPTAVITFISIIGFF. N276 carries an N-linked (GlcNAc...) asparagine glycan. The next 2 helical transmembrane spans lie at 287–307 and 317–337; these read EKIT…FMVS and VPLI…GTLA. The Cytoplasmic portion of the chain corresponds to 338–512; the sequence is ASSVIFVQKL…WDWVAAVLER (175 aa). The chain crosses the membrane as a helical span at residues 513-533; the sequence is VFLIFFTICFLFSAIGINLYG.

Belongs to the ligand-gated ion channel (TC 1.A.9) family. Acetylcholine receptor (TC 1.A.9.1) subfamily. As to expression, expressed in the body wall muscles that are arranged into four longitudinal bundles, some mechanosensory neurons, the head muscles and multiple interneurons. Not expressed in motor neurons (at protein level).

The protein localises to the cell membrane. Functionally, betaine receptor that functions as a ligand-gated non-selective monovalent cation channel in mechanosensory neurons to maintain basal levels of locomotion. The channel is permeable to Na(+) and K(+) but not to Ba(2+) or Ca(2+) ions. Elicits current in response to betaine, very weak current in response to choline, virtually no current in response to acetylcholine and nicotine, and no current in response to glycine and GABA. In Caenorhabditis elegans, this protein is Betaine receptor acr-23.